A 298-amino-acid chain; its full sequence is Biphenyl-2,3-diol 1,2-dioxygenase (298 aa).

VOC domains are found at residues 5–119 and 143–264; these read SLGY…IYYG and GLGH…YGWS. Residues histidine 146, histidine 210, and glutamate 260 each coordinate Fe cation.

Belongs to the extradiol ring-cleavage dioxygenase family. As to quaternary structure, homooctamer. The enzyme is composed of two planar tetramers rotated at 45 degrees relative to each other, with a channel in the middle. Fe(2+) is required as a cofactor.

It carries out the reaction biphenyl-2,3-diol + O2 = 2-hydroxy-6-oxo-6-phenylhexa-2,4-dienoate + H(+). It participates in xenobiotic degradation; biphenyl degradation; 2-hydroxy-2,4-pentadienoate and benzoate from biphenyl: step 3/4. Functionally, shows a preference for catechols with groups immediately adjacent to the hydroxyl substituents. The chain is Biphenyl-2,3-diol 1,2-dioxygenase (bphC) from Paraburkholderia xenovorans (strain LB400).